The primary structure comprises 379 residues: Homeobox protein SBH1 (379 aa).

The interval 75–125 (NNHNNNKTDDDDNNNNTGLGYYFMESDHHHHHHGNNNNNGSSSSSSSSAVK) is disordered. The segment covering 109 to 122 (NNNNNGSSSSSSSS) has biased composition (low complexity). Positions 261-281 (DLKGQLLRKYSGYLGSLKQEF) constitute an ELK domain. A DNA-binding region (homeobox; TALE-type) is located at residues 282–345 (MKKRKKGKLP…NQRKRHWKPS (64 aa)).

It belongs to the TALE/KNOX homeobox family. In terms of tissue distribution, expressed mainly in embryonic tissues. Weakly detected in stems and hypocotyl.

The protein resides in the nucleus. Possible transcription activator involved in early embryonic development. Probably binds to the DNA sequence 5'-TGAC-3'. In Glycine max (Soybean), this protein is Homeobox protein SBH1 (H1).